Here is a 286-residue protein sequence, read N- to C-terminus: Peroxisomal membrane protein pex14 (286 aa).

The SH3-binding motif lies at 61–69 (TSNFVSRDW). A coiled-coil region spans residues 122–214 (KILENLDEQT…REISSLRCLQ (93 aa)). The tract at residues 218–239 (KKDDTFATTSNSSIPVLENPLD) is disordered.

The protein belongs to the peroxin-14 family. In terms of assembly, interacts with PEX13 (via SH3 domain); forming the PEX13-PEX14 docking complex. Interacts with PEX5 (via WxxxF/Y motifs).

The protein localises to the peroxisome membrane. Component of the PEX13-PEX14 docking complex, a translocon channel that specifically mediates the import of peroxisomal cargo proteins bound to PEX5 receptor. The PEX13-PEX14 docking complex forms a large import pore which can be opened to a diameter of about 9 nm. Mechanistically, PEX5 receptor along with cargo proteins associates with the PEX14 subunit of the PEX13-PEX14 docking complex in the cytosol, leading to the insertion of the receptor into the organelle membrane with the concomitant translocation of the cargo into the peroxisome matrix. This chain is Peroxisomal membrane protein pex14 (pex14), found in Schizosaccharomyces pombe (strain 972 / ATCC 24843) (Fission yeast).